The primary structure comprises 325 residues: Polyamine aminopropyltransferase (325 aa).

Positions 11–248 constitute a PABS domain; sequence SSMAEDFAVE…TLWAMAMASD (238 aa). Gln44 is an S-methyl-5'-thioadenosine binding site. Spermidine contacts are provided by His75 and Asp99. S-methyl-5'-thioadenosine contacts are provided by residues Glu119 and 151–152; that span reads DG. Asp169 acts as the Proton acceptor in catalysis. Pro176 contributes to the S-methyl-5'-thioadenosine binding site.

The protein belongs to the spermidine/spermine synthase family. In terms of assembly, homodimer or homotetramer.

The protein localises to the cytoplasm. The enzyme catalyses S-adenosyl 3-(methylsulfanyl)propylamine + putrescine = S-methyl-5'-thioadenosine + spermidine + H(+). It participates in amine and polyamine biosynthesis; spermidine biosynthesis; spermidine from putrescine: step 1/1. Functionally, catalyzes the irreversible transfer of a propylamine group from the amino donor S-adenosylmethioninamine (decarboxy-AdoMet) to putrescine (1,4-diaminobutane) to yield spermidine. The polypeptide is Polyamine aminopropyltransferase (Nitrosomonas europaea (strain ATCC 19718 / CIP 103999 / KCTC 2705 / NBRC 14298)).